Here is a 483-residue protein sequence, read N- to C-terminus: MEILCHSAPLHEIKAEASLIFVINKEFSHEWIADSELFGSVGFEGKEGQTLFIPQSKTLYYALDSLTPDSIRESSAKALRALKKYPFSSFKVGIYTQESLECLEAMAAGFLLGDYNFETYKSQKSESKLTQILISLQTHLGRQIDSKSFETILARQSAIARAVNLARELVNTPPEDATPQKIAQAAQKVAQEHQLECRIEDEKFLEKEQMGAFLAVSRASIHRPRLIHLTHQSPKPKLKVALVGKGLTYDSGGLSLKPADFMVTMKADKGGGCAVIAILQAAKELGLELELHGIVGATENMIGGNAYKPDDVLRAKNGKTIEIRNTDAEGRLVLADCLVYAQELKPDYIIDLATLTGACVVGLGEYTSGVLGHSQELKHRFIECATQSGELTADLPFNRHLKKLIESKVADVCNVSSTRYGGSITAGLFLSEFIEESYKEKWLHLDIAGPAYVEKEWDVNPHGASGAGVRMVLQFLEQLTKES.

Mn(2+)-binding residues include K245 and D250. The active site involves K257. Mn(2+)-binding residues include D268, D327, and E329. Residue R331 is part of the active site.

This sequence belongs to the peptidase M17 family. Requires Mn(2+) as cofactor.

It is found in the cytoplasm. The catalysed reaction is Release of an N-terminal amino acid, Xaa-|-Yaa-, in which Xaa is preferably Leu, but may be other amino acids including Pro although not Arg or Lys, and Yaa may be Pro. Amino acid amides and methyl esters are also readily hydrolyzed, but rates on arylamides are exceedingly low.. It catalyses the reaction Release of an N-terminal amino acid, preferentially leucine, but not glutamic or aspartic acids.. Presumably involved in the processing and regular turnover of intracellular proteins. Catalyzes the removal of unsubstituted N-terminal amino acids from various peptides. The protein is Probable cytosol aminopeptidase of Wolinella succinogenes (strain ATCC 29543 / DSM 1740 / CCUG 13145 / JCM 31913 / LMG 7466 / NCTC 11488 / FDC 602W) (Vibrio succinogenes).